The sequence spans 764 residues: Palmitoyltransferase AKR1 (764 aa).

Disordered regions lie at residues Met-1–Asn-38 and Ser-51–Asp-71. At Met-1–His-321 the chain is on the cytoplasmic side. Positions Arg-10–Asp-27 are enriched in polar residues. A phosphoserine mark is found at Ser-51 and Ser-57. ANK repeat units follow at residues Pro-72–Asn-102, Glu-108–Ala-137, Leu-142–Met-171, Gln-175–Leu-204, Lys-213–Ile-242, and Glu-246–Gln-275. A helical membrane pass occupies residues Ala-322 to Phe-341. Over Ser-342–Pro-346 the chain is Lumenal. A helical transmembrane segment spans residues Leu-347 to Leu-364. Residues Asn-365 to Arg-384 lie on the Cytoplasmic side of the membrane. Residues Ser-385–Phe-405 form a helical membrane-spanning segment. Over Lys-406–Thr-418 the chain is Lumenal. A helical transmembrane segment spans residues Asn-419–Met-439. At Asp-440–Lys-513 the chain is on the cytoplasmic side. One can recognise a DHHC domain in the interval Asn-470–Thr-520. Cys-500 serves as the catalytic S-palmitoyl cysteine intermediate. Residues Ala-514–Leu-534 form a helical membrane-spanning segment. Topologically, residues Glu-535–Arg-570 are lumenal. Residues Phe-571–Phe-591 traverse the membrane as a helical segment. Topologically, residues Val-592 to Val-764 are cytoplasmic.

Belongs to the DHHC palmitoyltransferase family. AKR/ZDHHC17 subfamily.

The protein localises to the early endosome membrane. It is found in the golgi apparatus membrane. The enzyme catalyses L-cysteinyl-[protein] + hexadecanoyl-CoA = S-hexadecanoyl-L-cysteinyl-[protein] + CoA. Palmitoyltransferase specific for casein kinase 1. Palmitoylates isoforms YCK1 and YCK2 at both C-terminal cysteine residues, which is required for their proper plasma membrane localization. Required for constitutive endocytosis of a-factor receptor STE3 and both constitutive and pheromone-induced endocytosis of alpha-factor receptor STE2. In Saccharomyces cerevisiae (strain ATCC 204508 / S288c) (Baker's yeast), this protein is Palmitoyltransferase AKR1 (AKR1).